The following is a 101-amino-acid chain: Small ribosomal subunit protein uS14 (101 aa).

The tract at residues 1–20 is disordered; it reads MAKTSAVNRNKMRERMASRD. A compositionally biased stretch (basic and acidic residues) spans 11-20; it reads KMRERMASRD.

This sequence belongs to the universal ribosomal protein uS14 family. Part of the 30S ribosomal subunit. Contacts proteins S3 and S10.

Binds 16S rRNA, required for the assembly of 30S particles and may also be responsible for determining the conformation of the 16S rRNA at the A site. The polypeptide is Small ribosomal subunit protein uS14 (Granulibacter bethesdensis (strain ATCC BAA-1260 / CGDNIH1)).